Reading from the N-terminus, the 512-residue chain is Cytochrome P450 1A2 (512 aa).

An O-linked (GlcNAc) serine glycan is attached at Ser65. A substrate-binding site is contributed by Phe222. Residue Cys454 participates in heme binding.

Belongs to the cytochrome P450 family. Interacts with PGRMC1; the interaction requires PGRMC1 homodimerization. The cofactor is heme. As to expression, constitutively expressed in liver.

It localises to the endoplasmic reticulum membrane. It is found in the microsome membrane. The catalysed reaction is an organic molecule + reduced [NADPH--hemoprotein reductase] + O2 = an alcohol + oxidized [NADPH--hemoprotein reductase] + H2O + H(+). It carries out the reaction 17beta-estradiol + reduced [NADPH--hemoprotein reductase] + O2 = 2-hydroxy-17beta-estradiol + oxidized [NADPH--hemoprotein reductase] + H2O + H(+). The enzyme catalyses 17beta-estradiol + reduced [NADPH--hemoprotein reductase] + O2 = 4-hydroxy-17beta-estradiol + oxidized [NADPH--hemoprotein reductase] + H2O + H(+). It catalyses the reaction estrone + reduced [NADPH--hemoprotein reductase] + O2 = 2-hydroxyestrone + oxidized [NADPH--hemoprotein reductase] + H2O + H(+). The catalysed reaction is estrone + reduced [NADPH--hemoprotein reductase] + O2 = 4-hydroxyestrone + oxidized [NADPH--hemoprotein reductase] + H2O + H(+). It carries out the reaction cholesterol + reduced [NADPH--hemoprotein reductase] + O2 = 25-hydroxycholesterol + oxidized [NADPH--hemoprotein reductase] + H2O + H(+). The enzyme catalyses all-trans-retinol + reduced [NADPH--hemoprotein reductase] + O2 = all-trans-retinal + oxidized [NADPH--hemoprotein reductase] + 2 H2O + H(+). It catalyses the reaction all-trans-retinal + reduced [NADPH--hemoprotein reductase] + O2 = all-trans-retinoate + oxidized [NADPH--hemoprotein reductase] + H2O + 2 H(+). The catalysed reaction is (5Z,8Z,11Z,14Z)-eicosatetraenoate + reduced [NADPH--hemoprotein reductase] + O2 = (14R,15S)-epoxy-(5Z,8Z,11Z)-eicosatrienoate + oxidized [NADPH--hemoprotein reductase] + H2O + H(+). It carries out the reaction (5Z,8Z,11Z,14Z)-eicosatetraenoate + reduced [NADPH--hemoprotein reductase] + O2 = (14S,15R)-epoxy-(5Z,8Z,11Z)-eicosatrienoate + oxidized [NADPH--hemoprotein reductase] + H2O + H(+). The enzyme catalyses (5Z,8Z,11Z,14Z,17Z)-eicosapentaenoate + reduced [NADPH--hemoprotein reductase] + O2 = (17R,18S)-epoxy-(5Z,8Z,11Z,14Z)-eicosatetraenoate + oxidized [NADPH--hemoprotein reductase] + H2O + H(+). It catalyses the reaction (4Z,7Z,10Z,13Z,16Z,19Z)-docosahexaenoate + reduced [NADPH--hemoprotein reductase] + O2 = (19R,20S)-epoxy-(4Z,7Z,10Z,13Z,16Z)-docosapentaenoate + oxidized [NADPH--hemoprotein reductase] + H2O + H(+). The catalysed reaction is (5S)-hydroperoxy-(6E,8Z,11Z,14Z)-eicosatetraenoate = 5-oxo-(6E,8Z,11Z,14Z)-eicosatetraenoate + H2O. It carries out the reaction (12S)-hydroperoxy-(5Z,8Z,10E,14Z)-eicosatetraenoate = 12-oxo-(5Z,8Z,10E,14Z)-eicosatetraenoate + H2O. The enzyme catalyses (15S)-hydroperoxy-(5Z,8Z,11Z,13E)-eicosatetraenoate = 15-oxo-(5Z,8Z,11Z,13E)-eicosatetraenoate + H2O. It catalyses the reaction (13S)-hydroperoxy-(9Z,11E)-octadecadienoate = 13-oxo-(9Z,11E)-octadecadienoate + H2O. The catalysed reaction is (5Z,8Z,11Z,14Z)-eicosatetraenoate + reduced [NADPH--hemoprotein reductase] + O2 = 13-hydroxy-(5Z,8Z,11Z,14Z)-eicosatetraenoate + oxidized [NADPH--hemoprotein reductase] + H2O + H(+). It carries out the reaction (5Z,8Z,11Z,14Z)-eicosatetraenoate + reduced [NADPH--hemoprotein reductase] + O2 = 19-hydroxy-(5Z,8Z,11Z,14Z)-eicosatetraenoate + oxidized [NADPH--hemoprotein reductase] + H2O + H(+). The enzyme catalyses (9Z,12Z)-octadecadienoate + reduced [NADPH--hemoprotein reductase] + O2 = 11-hydroxy-(9Z,12Z)-octadecadienoate + oxidized [NADPH--hemoprotein reductase] + H2O + H(+). It functions in the pathway cofactor metabolism; retinol metabolism. Its pathway is steroid metabolism; cholesterol metabolism. It participates in lipid metabolism; arachidonate metabolism. Functionally, a cytochrome P450 monooxygenase involved in the metabolism of various endogenous substrates, including fatty acids, steroid hormones and vitamins. Mechanistically, uses molecular oxygen inserting one oxygen atom into a substrate, and reducing the second into a water molecule, with two electrons provided by NADPH via cytochrome P450 reductase (NADPH--hemoprotein reductase). Catalyzes the hydroxylation of carbon-hydrogen bonds. Exhibits high catalytic activity for the formation of hydroxyestrogens from estrone (E1) and 17beta-estradiol (E2), namely 2-hydroxy E1 and E2. Metabolizes cholesterol toward 25-hydroxycholesterol, a physiological regulator of cellular cholesterol homeostasis. May act as a major enzyme for all-trans retinoic acid biosynthesis in the liver. Catalyzes two successive oxidative transformation of all-trans retinol to all-trans retinal and then to the active form all-trans retinoic acid. Primarily catalyzes stereoselective epoxidation of the last double bond of polyunsaturated fatty acids (PUFA), displaying a strong preference for the (R,S) stereoisomer. Catalyzes bisallylic hydroxylation and omega-1 hydroxylation of PUFA. May also participate in eicosanoids metabolism by converting hydroperoxide species into oxo metabolites (lipoxygenase-like reaction, NADPH-independent). Plays a role in the oxidative metabolism of xenobiotics. Catalyzes the N-hydroxylation of heterocyclic amines and the O-deethylation of phenacetin. Metabolizes caffeine via N3-demethylation. This is Cytochrome P450 1A2 (CYP1A2) from Canis lupus familiaris (Dog).